A 261-amino-acid chain; its full sequence is MGRVSAWEALLLGVVEGLTEFLPVSSTGHLTLLFHLLGLPVEEDPFLKTFLVAIQLGAILAVLLLYGRRLAADRALWLRIAVAFVPTGVIGFLFYPLIKGVILGNDAVVAFFLFFVGAVLLFADRLAERAQYQDVKALPLARVAWIGVFQGLAALFPGTSRSGATILGGLLLGLNRQAAAEFSFLLALPTMFAAVGYDLWKSAPEVPEGGWSLLLLGFLAALVTALVTVRWMLAFVARHGFRPFALYRMALAAVYAFFFLR.

8 helical membrane passes run 9-31 (ALLL…GHLT), 46-66 (FLKT…LLLY), 80-100 (IAVA…LIKG), 102-122 (ILGN…VLLF), 137-157 (ALPL…ALFP), 180-200 (AEFS…YDLW), 209-229 (GGWS…LVTV), and 240-260 (GFRP…FFFL).

This sequence belongs to the UppP family.

The protein resides in the cell inner membrane. The catalysed reaction is di-trans,octa-cis-undecaprenyl diphosphate + H2O = di-trans,octa-cis-undecaprenyl phosphate + phosphate + H(+). Its function is as follows. Catalyzes the dephosphorylation of undecaprenyl diphosphate (UPP). Confers resistance to bacitracin. This chain is Undecaprenyl-diphosphatase, found in Thermus thermophilus (strain ATCC 27634 / DSM 579 / HB8).